The following is a 2200-amino-acid chain: Non-reducing polyketide synthase tpeB (2200 aa).

The 240-residue stretch at 16 to 255 folds into the Starter acyltransferase (SAT) domain; it reads FFGDQTVDTL…MDLPLGTPAH (240 aa). The 434-residue stretch at 382–815 folds into the Ketosynthase family 3 (KS3) domain; that stretch reads SNMIAIVGQS…GGNNCVLLEE (434 aa). Catalysis depends on for beta-ketoacyl synthase activity residues Cys554, His690, and His729. The region spanning 914 to 1202 is the Malonyl-CoA:ACP transacylase (MAT) domain; it reads VFAFTGQGSQ…VLNSFIKATL (289 aa). Residues 1296 to 1621 are product template (PT) domain; sequence TASLQRVREE…TKRILTTILG (326 aa). Residues 1300-1433 form an N-terminal hotdog fold region; sequence QRVREERIQG…CKIRFESKAD (134 aa). The PKS/mFAS DH domain maps to 1300–1617; the sequence is QRVREERIQG…FQRLTKRILT (318 aa). His1332 acts as the Proton acceptor; for dehydratase activity in catalysis. Residues 1462-1617 are C-terminal hotdog fold; the sequence is NGHKLPKPVV…FQRLTKRILT (156 aa). The active-site Proton donor; for dehydratase activity is Asp1522. The tract at residues 1625–1652 is disordered; it reads DHHNSNEVRNGNATTTHTNPPAHATTQS. Low complexity predominate over residues 1636–1650; the sequence is NATTTHTNPPAHATT. Carrier domains lie at 1671-1748 and 1791-1865; these read TVGE…AELP and ANYA…GPNT. O-(pantetheine 4'-phosphoryl)serine is present on residues Ser1708 and Ser1825. Residues 1931-2173 form a thioesterase (TE) domain region; sequence MFFLPDGTGY…TVPCDHLSIM (243 aa).

Pantetheine 4'-phosphate serves as cofactor.

The protein operates within secondary metabolite biosynthesis. Functionally, non-reducing polyketide synthase; part of the gene cluster that mediates the biosynthesis of polyesters containing 2,4-dihydroxy-6-(2-hydroxypropyl)benzoate and 3-hydroxybutyrate moieties, such as talapolyester G, 15G256beta and 15G256beta-2; as well as to oxidized derivatives such as 15G256alpha. The biosynthesis of the polyesters probably starts with the formation of the diketide 3-hydroxybutyryl-S-ACP catalyzed by the partially reducing polyketide synthase tpeA. The acceptance of 3-hydroxybutyryl by the non-reducing polyketide synthase tpeB would initiate further elongation and cyclization, catalyzed by KS and PT, respectively, to form 2,4-dihydroxy-6-(2-hydroxyn-propyl)benzoyl-S-ACP intermediate. The TE domain could catalyze lactonization at this step to yield 6-hydroxymellein as a derailment product. The polyesterification process maybe occurs when additional molecules of 3-hydroxybutyryl are transferred to tpeB. Following the first esterification step, an intramolecular cyclization catalyzed by the TE domain of tpeB would give talarodioxadione 1, whereas the ethyl esterification of talapolyester G perhaps happens spontaneously. Further oxidation by the cytochrome P450 monooxygenase tpeC then leads to the formation of oxidized derivatives. The polypeptide is Non-reducing polyketide synthase tpeB (Talaromyces stipitatus (strain ATCC 10500 / CBS 375.48 / QM 6759 / NRRL 1006) (Penicillium stipitatum)).